The chain runs to 581 residues: Arginine--tRNA ligase (581 aa).

Positions 126–136 match the 'HIGH' region motif; that stretch reads PNLAKEMHVGH.

Belongs to the class-I aminoacyl-tRNA synthetase family. As to quaternary structure, monomer.

Its subcellular location is the cytoplasm. The catalysed reaction is tRNA(Arg) + L-arginine + ATP = L-arginyl-tRNA(Arg) + AMP + diphosphate. The chain is Arginine--tRNA ligase from Shewanella loihica (strain ATCC BAA-1088 / PV-4).